Consider the following 351-residue polypeptide: Alcohol dehydrogenase 2 (351 aa).

Residues C47, H70, C101, C104, C107, C115, and C157 each contribute to the Zn(2+) site. NAD(+) is bound by residues 181-187, D205, K210, 272-274, and R344; these read GAGGGLG and VGL.

It belongs to the zinc-containing alcohol dehydrogenase family. Homotetramer. The cofactor is Zn(2+).

It catalyses the reaction a secondary alcohol + NAD(+) = a ketone + NADH + H(+). Functionally, versatile oxidoreductase that catalyzes the oxidation and reduction of a broad range of substrates. Preferentially oxidizes secondary alcohols. Has highest activity for racemic 2-octanol. Is also an efficient reductase for selected substrates. Substrate selectivity was found for medium chain lipophilic ketones. Has highest activities for 2-octanone, 2-nonanone and 2-decanone. The enzyme is (S)-selective in the reduction direction and produces exclusively the (S)-enantiomer. The sequence is that of Alcohol dehydrogenase 2 (ADH2) from Yarrowia lipolytica (strain CLIB 122 / E 150) (Yeast).